Reading from the N-terminus, the 1224-residue chain is Potassium channel subfamily T member 1 (1224 aa).

The interval 1–37 (MARAKLPRSPSEGKAGPGDTPAGAAAPEEPHGLSPLL) is disordered. The Cytoplasmic segment spans residues 1–79 (MARAKLPRSP…LFFIKNQRSS (79 aa)). The span at 13–27 (GKAGPGDTPAGAAAP) shows a compositional bias: low complexity. Residues 80 to 112 (LRIRLFNFSLKLLTCLLYIVRVLLDNPDQGIGC) traverse the membrane as a helical segment. At 113–139 (WGCTKYNYTFNGSSSEFHWAPILWVER) the chain is on the extracellular side. N-linked (GlcNAc...) asparagine glycans are attached at residues asparagine 119 and asparagine 123. A helical membrane pass occupies residues 140-164 (KMALWVIQVIVATISFLETMLIIYL). The Cytoplasmic segment spans residues 165 to 178 (SYKGNIWEQIFHVS). Residues 179–194 (FVLEMINTLPFIITVF) form a helical membrane-spanning segment. The Extracellular segment spans residues 195-201 (WPPLRNL). The chain crosses the membrane as a helical span at residues 202 to 219 (FIPVFLNCWLAKHALENM). At 220–232 (INDFHRAILRTQS) the chain is on the cytoplasmic side. Residues 233-260 (AMFNQVLILFCTLLCLVFTGTCGIQHLE) form a helical membrane-spanning segment. The Extracellular portion of the chain corresponds to 261 to 267 (RAGGNLN). The segment at residues 268–288 (LLTSFYFCIVTFSTVGFGDVT) is an intramembrane region (pore-forming). Residues valine 282 and glycine 283 each contribute to the K(+) site. Residues 289-290 (PK) lie on the Extracellular side of the membrane. The chain crosses the membrane as a helical span at residues 291–324 (IWPSQLLVVILICVTLVVLPLQFEELVYLWMERQ). Residues 325–1224 (KSGGNYSRHR…NPETRDETQL (900 aa)) lie on the Cytoplasmic side of the membrane. The RCK N-terminal 1 domain maps to 338–474 (EKHVVLCVSS…FHVKFADHVV (137 aa)). Na(+) is bound by residues leucine 499, histidine 502, serine 524, and asparagine 526. The tract at residues 644-675 (QNTDCRPSQGGSGGDGTKLTLPTENGSGSRRP) is disordered. Over residues 663-673 (TLPTENGSGSR) the composition is skewed to polar residues. The Zn(2+) site is built by cysteine 744 and cysteine 745. Residues arginine 747 and lysine 750 each contribute to the K(+) site. Positions 747 and 750 each coordinate Na(+). Residues cysteine 752 and histidine 754 each contribute to the Zn(2+) site. K(+) is bound by residues asparagine 755, tyrosine 757, tyrosine 763, and glycine 764. Tyrosine 757 contributes to the Na(+) binding site. Phenylalanine 765 serves as a coordination point for Na(+). The 141-residue stretch at 767 to 907 (NKLIIVSAET…QFRAKDSYSL (141 aa)) folds into the RCK N-terminal 2 domain. 5 residues coordinate K(+): serine 773, leucine 804, aspartate 806, glycine 828, and aspartate 851. Disordered regions lie at residues 1038 to 1066 (REAKGPWGTRAASGSGSTHGRHGGSADPV) and 1198 to 1224 (SSSQSRKSSCSNKLSSCNPETRDETQL). Low complexity-rich tracts occupy residues 1045–1055 (GTRAASGSGST) and 1198–1215 (SSSQSRKSSCSNKLSSCN).

It belongs to the potassium channel family. Calcium-activated (TC 1.A.1.3) subfamily. KCa4.1/KCNT1 sub-subfamily. Homotetramer; which constitutes the Na(+)-activated K(+) channel. Interacts with KCNT2; these heterodimer channels differ from the homomers in their unitary conductance, kinetic behavior, subcellular localization, and response to activation of protein kinase C. Interacts (via C-terminus) with FMR1; this interaction alters gating properties of KCNT1. Interacts with CRBN via its cytoplasmic C-terminus. In terms of processing, phosphorylated by protein kinase C. Phosphorylation of the C-terminal domain increases channel activity. In terms of tissue distribution, enriched in the brainstem and olfactory bulb and detected at significant levels in four different brain regions.

Its subcellular location is the cell membrane. It catalyses the reaction K(+)(in) = K(+)(out). With respect to regulation, activated by high intracellular Na(+). In addition to activation by Na(+), is cooperatively activated by intracellular Cl(-) levels. Inhibited by Zn(2+). Activated upon stimulation of G-protein coupled receptors, such as CHRM1 and GRIA1. Functionally, sodium-activated K(+) channel. Acts as an important mediator of neuronal membrane excitability. Contributes to the delayed outward currents. Regulates neuronal bursting in sensory neurons. Contributes to synaptic development and plasticity. In Mus musculus (Mouse), this protein is Potassium channel subfamily T member 1 (Kcnt1).